The chain runs to 213 residues: Thymidylate kinase (213 aa).

Residue 10–17 (GPDGAGKT) participates in ATP binding.

The protein belongs to the thymidylate kinase family.

It catalyses the reaction dTMP + ATP = dTDP + ADP. Phosphorylation of dTMP to form dTDP in both de novo and salvage pathways of dTTP synthesis. The chain is Thymidylate kinase from Limosilactobacillus reuteri (strain DSM 20016) (Lactobacillus reuteri).